Reading from the N-terminus, the 136-residue chain is 1,4-dihydroxy-2-naphthoyl-CoA hydrolase (136 aa).

The active site involves Asp16.

It belongs to the 4-hydroxybenzoyl-CoA thioesterase family. DHNA-CoA hydrolase subfamily.

It carries out the reaction 1,4-dihydroxy-2-naphthoyl-CoA + H2O = 1,4-dihydroxy-2-naphthoate + CoA + H(+). The protein operates within cofactor biosynthesis; phylloquinone biosynthesis. It participates in quinol/quinone metabolism; 1,4-dihydroxy-2-naphthoate biosynthesis; 1,4-dihydroxy-2-naphthoate from chorismate: step 7/7. Functionally, catalyzes the hydrolysis of 1,4-dihydroxy-2-naphthoyl-CoA (DHNA-CoA) to 1,4-dihydroxy-2-naphthoate (DHNA), a reaction involved in phylloquinone (vitamin K1) biosynthesis. The polypeptide is 1,4-dihydroxy-2-naphthoyl-CoA hydrolase (Synechococcus sp. (strain ATCC 27144 / PCC 6301 / SAUG 1402/1) (Anacystis nidulans)).